Reading from the N-terminus, the 198-residue chain is GTP-binding protein RHO1 (198 aa).

16–23 (GDGACGKT) is a GTP binding site. The short motif at 38 to 46 (YVPTVFENY) is the Effector region element. GTP contacts are provided by residues 63 to 67 (DTAGQ) and 121 to 124 (CKSD). Cysteine methyl ester is present on cysteine 195. The S-geranylgeranyl cysteine moiety is linked to residue cysteine 195. The propeptide at 196–198 (VVL) is removed in mature form.

This sequence belongs to the small GTPase superfamily. Rho family.

It localises to the cell membrane. This Candida albicans (strain SC5314 / ATCC MYA-2876) (Yeast) protein is GTP-binding protein RHO1 (RHO1).